The sequence spans 400 residues: Elongation factor Tu (400 aa).

In terms of domain architecture, tr-type G spans 10-210 (KPHCNVGTIG…VDSYIPIPPR (201 aa)). Positions 19-26 (GHVDHGKT) are G1. GTP is bound at residue 19–26 (GHVDHGKT). A Mg(2+)-binding site is contributed by Thr26. The segment at 60-64 (GLTIA) is G2. The G3 stretch occupies residues 81–84 (DCPG). GTP-binding positions include 81 to 85 (DCPGH) and 136 to 139 (NKCD). The tract at residues 136–139 (NKCD) is G4. A G5 region spans residues 174–176 (SAI).

Belongs to the TRAFAC class translation factor GTPase superfamily. Classic translation factor GTPase family. EF-Tu/EF-1A subfamily. Monomer.

It localises to the cytoplasm. The catalysed reaction is GTP + H2O = GDP + phosphate + H(+). GTP hydrolase that promotes the GTP-dependent binding of aminoacyl-tRNA to the A-site of ribosomes during protein biosynthesis. This Dehalococcoides mccartyi (strain ATCC BAA-2266 / KCTC 15142 / 195) (Dehalococcoides ethenogenes (strain 195)) protein is Elongation factor Tu.